The primary structure comprises 279 residues: Epidermal growth factor-like protein 7 (279 aa).

The first 21 residues, 1–21 (MWGSGELLVAWFLVLAAGGTT), serve as a signal peptide directing secretion. Residues 28-109 (SRRVCTVGVS…TNGLPGACGA (82 aa)) form the EMI domain. Intrachain disulfides connect C32–C94, C57–C63, C93–C107, C112–C122, C116–C128, C130–C139, C146–C157, C153–C166, and C168–C181. An EGF-like 1 domain is found at 108 to 140 (GAAICQPPCGNEGSCIRPGRCRCPVGWQGDTCQ). The Cell attachment site motif lies at 131–133 (PVG). The region spanning 142–182 (DVDECSTGEARCPQRCVNTVGSYWCQCWEGQSPSADGVLCL) is the EGF-like 2; calcium-binding domain. Coiled coils occupy residues 200–224 (SVVREEVYKLQARVDVLEQKLQLVL) and 250–274 (FQQLDRIDSLSEQVSFLEEQLGSCS).

Interacts with ITGAV/ITGB3 in an RGD-dependent manner, increasing endothelial cell's motility.

The protein resides in the secreted. It is found in the extracellular space. Regulates vascular tubulogenesis in vivo. Inhibits platelet-derived growth factor (PDGF)-BB-induced smooth muscle cell migration and promotes endothelial cell adhesion to the extracellular matrix and angiogenesis. The chain is Epidermal growth factor-like protein 7 (Egfl7) from Rattus norvegicus (Rat).